The following is an 88-amino-acid chain: Small ribosomal subunit protein bS20 (88 aa).

The interval 1–27 (MANSKSAKKRALQSEKRRQHNASRRSM) is disordered.

Belongs to the bacterial ribosomal protein bS20 family.

Functionally, binds directly to 16S ribosomal RNA. The protein is Small ribosomal subunit protein bS20 of Shewanella oneidensis (strain ATCC 700550 / JCM 31522 / CIP 106686 / LMG 19005 / NCIMB 14063 / MR-1).